Consider the following 156-residue polypeptide: Arginine repressor (156 aa).

Belongs to the ArgR family.

The protein localises to the cytoplasm. The protein operates within amino-acid biosynthesis; L-arginine biosynthesis [regulation]. Functionally, regulates arginine biosynthesis genes. This chain is Arginine repressor, found in Vibrio cholerae serotype O1 (strain ATCC 39315 / El Tor Inaba N16961).